An 896-amino-acid polypeptide reads, in one-letter code: Translation initiation factor IF-2 (896 aa).

A disordered region spans residues 49-310 (LKKEHGDTSG…MQQGFDKSAT (262 aa)). Positions 57 to 66 (SGETEPTRLT) are enriched in polar residues. 3 stretches are compositionally biased toward basic and acidic residues: residues 101–174 (STIE…KDMN), 184–240 (AKKE…KSAD), and 250–263 (REAEDAADKKDEKA). The span at 284–295 (RNQRGRGGKGKL) shows a compositional bias: basic residues. One can recognise a tr-type G domain in the interval 395-564 (GRAPVVTIMG…LLQSEVLELT (170 aa)). Residues 404-411 (GHVDHGKT) form a G1 region. 404-411 (GHVDHGKT) contributes to the GTP binding site. Residues 429-433 (GITQH) form a G2 region. A G3 region spans residues 450–453 (DTPG). GTP contacts are provided by residues 450–454 (DTPGH) and 504–507 (NKID). The tract at residues 504-507 (NKID) is G4. The segment at 540 to 542 (SAK) is G5.

It belongs to the TRAFAC class translation factor GTPase superfamily. Classic translation factor GTPase family. IF-2 subfamily.

The protein localises to the cytoplasm. In terms of biological role, one of the essential components for the initiation of protein synthesis. Protects formylmethionyl-tRNA from spontaneous hydrolysis and promotes its binding to the 30S ribosomal subunits. Also involved in the hydrolysis of GTP during the formation of the 70S ribosomal complex. In Vibrio atlanticus (strain LGP32) (Vibrio splendidus (strain Mel32)), this protein is Translation initiation factor IF-2.